The sequence spans 314 residues: 4-hydroxy-3-methylbut-2-enyl diphosphate reductase (314 aa).

Residue C18 coordinates [4Fe-4S] cluster. 2 residues coordinate (2E)-4-hydroxy-3-methylbut-2-enyl diphosphate: H47 and H80. Residues H47 and H80 each contribute to the dimethylallyl diphosphate site. Isopentenyl diphosphate-binding residues include H47 and H80. C102 contributes to the [4Fe-4S] cluster binding site. H130 serves as a coordination point for (2E)-4-hydroxy-3-methylbut-2-enyl diphosphate. Dimethylallyl diphosphate is bound at residue H130. H130 contributes to the isopentenyl diphosphate binding site. E132 serves as the catalytic Proton donor. T171 contributes to the (2E)-4-hydroxy-3-methylbut-2-enyl diphosphate binding site. Position 201 (C201) interacts with [4Fe-4S] cluster. Residues S229, S230, N231, and S273 each coordinate (2E)-4-hydroxy-3-methylbut-2-enyl diphosphate. The dimethylallyl diphosphate site is built by S229, S230, N231, and S273. Positions 229, 230, 231, and 273 each coordinate isopentenyl diphosphate.

Belongs to the IspH family. Requires [4Fe-4S] cluster as cofactor.

It catalyses the reaction isopentenyl diphosphate + 2 oxidized [2Fe-2S]-[ferredoxin] + H2O = (2E)-4-hydroxy-3-methylbut-2-enyl diphosphate + 2 reduced [2Fe-2S]-[ferredoxin] + 2 H(+). It carries out the reaction dimethylallyl diphosphate + 2 oxidized [2Fe-2S]-[ferredoxin] + H2O = (2E)-4-hydroxy-3-methylbut-2-enyl diphosphate + 2 reduced [2Fe-2S]-[ferredoxin] + 2 H(+). The protein operates within isoprenoid biosynthesis; dimethylallyl diphosphate biosynthesis; dimethylallyl diphosphate from (2E)-4-hydroxy-3-methylbutenyl diphosphate: step 1/1. Its pathway is isoprenoid biosynthesis; isopentenyl diphosphate biosynthesis via DXP pathway; isopentenyl diphosphate from 1-deoxy-D-xylulose 5-phosphate: step 6/6. Functionally, catalyzes the conversion of 1-hydroxy-2-methyl-2-(E)-butenyl 4-diphosphate (HMBPP) into a mixture of isopentenyl diphosphate (IPP) and dimethylallyl diphosphate (DMAPP). Acts in the terminal step of the DOXP/MEP pathway for isoprenoid precursor biosynthesis. This Phenylobacterium zucineum (strain HLK1) protein is 4-hydroxy-3-methylbut-2-enyl diphosphate reductase.